An 822-amino-acid polypeptide reads, in one-letter code: AP-1 complex subunit gamma-1 (822 aa).

Residues 597–628 (EIVQTNGETEPAPLETKPPPSGPQPTSQANDL) form a disordered region. A GAE domain is found at 702 to 817 (AGIPSITAYS…QDLAEVNNFP (116 aa)).

It belongs to the adaptor complexes large subunit family. In terms of assembly, adaptor protein complex 1 (AP-1) is a heterotetramer composed of two large adaptins (gamma-type subunit AP1G1 and beta-type subunit AP1B1), a medium adaptin (mu-type subunit AP1M1 or AP1M2) and a small adaptin (sigma-type subunit AP1S1 or AP1S2 or AP1S3). Interacts (via GAE domain) with RABEP1. Interacts with EPS15. Interacts with SYNRG/gamma-synergin. Interacts (via GAE domain) with AP1AR (via coiled-coil domain). Interacts with CLN3 (via dileucine motif); this interaction facilitates lysosomal targeting. Interacts (via GAE domain) with AFTPH/aftiphilin; the interaction is required to recruit AFTPH/aftiphilin to the perinuclear region of the cell.

The protein localises to the golgi apparatus. The protein resides in the cytoplasmic vesicle. It is found in the clathrin-coated vesicle membrane. It localises to the cytoplasm. Its subcellular location is the perinuclear region. The protein localises to the clathrin-coated vesicle. The protein resides in the membrane. It is found in the clathrin-coated pit. In terms of biological role, subunit of clathrin-associated adaptor protein complex 1 that plays a role in protein sorting in the late-Golgi/trans-Golgi network (TGN) and/or endosomes. The AP complexes mediate both the recruitment of clathrin to membranes and the recognition of sorting signals within the cytosolic tails of transmembrane cargo molecules. In association with AFTPH/aftiphilin in the aftiphilin/p200/gamma-synergin complex, involved in the trafficking of transferrin from early to recycling endosomes, and the membrane trafficking of furin and the lysosomal enzyme cathepsin D between the trans-Golgi network (TGN) and endosomes. This chain is AP-1 complex subunit gamma-1 (AP1G1), found in Pongo abelii (Sumatran orangutan).